A 509-amino-acid polypeptide reads, in one-letter code: 2,3-bisphosphoglycerate-independent phosphoglycerate mutase (509 aa).

Positions 14 and 64 each coordinate Mn(2+). Serine 64 serves as the catalytic Phosphoserine intermediate. Residues histidine 125, 155–156 (RD), arginine 187, arginine 193, 259–262 (RADR), and lysine 332 contribute to the substrate site. Aspartate 399, histidine 403, aspartate 440, histidine 441, and histidine 459 together coordinate Mn(2+).

This sequence belongs to the BPG-independent phosphoglycerate mutase family. In terms of assembly, monomer. Requires Mn(2+) as cofactor.

It catalyses the reaction (2R)-2-phosphoglycerate = (2R)-3-phosphoglycerate. The protein operates within carbohydrate degradation; glycolysis; pyruvate from D-glyceraldehyde 3-phosphate: step 3/5. In terms of biological role, catalyzes the interconversion of 2-phosphoglycerate and 3-phosphoglycerate. This chain is 2,3-bisphosphoglycerate-independent phosphoglycerate mutase, found in Aeromonas salmonicida (strain A449).